A 293-amino-acid chain; its full sequence is MQLGLWFGLFAVAAAPLVSANYGSPGRGAGRQIQYLPGGPSEGLEEYVNAATGGSQPSANQLTAQAEIQIVGEARRLGRVQAQLQALNNNPTYQKLKNSEDIAESLAETNLASNIRQGKINVVSPQFVDQHLFRSLLVPSGHNNHQVIATQPLPPIIVHQPGAPPAHVNSGPPTVVRGNPVIYKIKPSVIYQQEVINKVPTPLSLNPVYVKVYKPGKKIEAPLAPVVAPVYSQPQSYGQPQAYNQPQAYSQPQSYGNSGSSGAGNSGPSSDSYAAGAETPLYASPAPYGSPSY.

An N-terminal signal peptide occupies residues 1 to 20 (MQLGLWFGLFAVAAAPLVSA). Residues 235–253 (QSYGQPQAYNQPQAYSQPQ) are compositionally biased toward polar residues. The interval 235 to 293 (QSYGQPQAYNQPQAYSQPQSYGNSGSSGAGNSGPSSDSYAAGAETPLYASPAPYGSPSY) is disordered.

It belongs to the chorion protein S36 family.

It localises to the secreted. Functionally, chorion membrane (egg shell) protein; protects the egg from the environment. In Drosophila virilis (Fruit fly), this protein is Chorion protein S36 (Cp36).